We begin with the raw amino-acid sequence, 190 residues long: FUN14 domain-containing protein 2 (190 aa).

Residues 1-13 (METSTQRTGSHLA) show a composition bias toward polar residues. The disordered stretch occupies residues 1–31 (METSTQRTGSHLAQTAAARHSASSRGEAARV). Over 1-81 (METSTQRTGS…GQESGPSAEK (81 aa)) the chain is Cytoplasmic. 2 positions are modified to phosphoserine: Ser10 and Ser54. A helical transmembrane segment spans residues 82–102 (YSVATQLLIGGVTGWCTGFIF). Residues 103-108 (QKVGKL) are Mitochondrial intermembrane-facing. The helical transmembrane segment at 109–129 (AATAVGGGFFLLQLANHTGYI) threads the bilayer. Over 130-165 (KVDWQRVEKDMKKAKEQLKIRKSNQIPTEVKSKAEE) the chain is Cytoplasmic. Ser152 is modified (phosphoserine). The chain crosses the membrane as a helical span at residues 166–186 (VVSFVKKNVLVTGGFFGGFLL). The Mitochondrial intermembrane portion of the chain corresponds to 187 to 190 (GMAS).

This sequence belongs to the FUN14 family.

The protein resides in the mitochondrion outer membrane. It is found in the nucleus. In terms of biological role, binds directly and specifically 1,2-Diacyl-sn-glycero-3-phospho-(1'-myo-inositol-3',4',5'-bisphosphate) (PIP3) leading to the recruitment of PIP3 to mitochondria and may play a role in the regulation of the platelet activation via AKT/GSK3B/cGMP signaling pathways. May act as transcription factor that regulates SREBP1 (isoform SREBP-1C) expression in order to modulate triglyceride (TG) homeostasis in hepatocytes. This chain is FUN14 domain-containing protein 2, found in Bos taurus (Bovine).